We begin with the raw amino-acid sequence, 121 residues long: Large ribosomal subunit protein uL14c (121 aa).

As to quaternary structure, component of the chloroplast large ribosomal subunit (LSU). Mature 70S chloroplast ribosomes of higher plants consist of a small (30S) and a large (50S) subunit. The 30S small subunit contains 1 molecule of ribosomal RNA (16S rRNA) and 24 different proteins. The 50S large subunit contains 3 rRNA molecules (23S, 5S and 4.5S rRNA) and 33 different proteins.

The protein resides in the plastid. It localises to the chloroplast. Its function is as follows. Component of the chloroplast ribosome (chloro-ribosome), a dedicated translation machinery responsible for the synthesis of chloroplast genome-encoded proteins, including proteins of the transcription and translation machinery and components of the photosynthetic apparatus. The chain is Large ribosomal subunit protein uL14c from Spinacia oleracea (Spinach).